We begin with the raw amino-acid sequence, 945 residues long: Endo-1,4-beta-xylanase 1 (945 aa).

Residues N16–K41 are compositionally biased toward basic and acidic residues. The segment at N16–I50 is disordered. CBM-cenC domains are found at residues N57 to S197, I227 to P362, and N397 to S541. Residues N86, N239, N305, N349, N417, N453, and N687 are each glycosylated (N-linked (GlcNAc...) asparagine). Residues S589–V884 form the GH10 domain. Residue E718 is the Proton donor of the active site. Catalysis depends on E819, which acts as the Nucleophile.

It belongs to the glycosyl hydrolase 10 (cellulase F) family. In terms of tissue distribution, predominantly expressed in vascular bundles, but not in vessel cells. Mostly expressed in stems, at lower levels in roots, and weakly in inflorescences and seedlings.

Its subcellular location is the secreted. The protein resides in the cell wall. It carries out the reaction Endohydrolysis of (1-&gt;4)-beta-D-xylosidic linkages in xylans.. It functions in the pathway glycan degradation; xylan degradation. In terms of biological role, binds to and hydrolyzes insoluble and soluble xylan substrates. Exhibits xylanase activity. This Arabidopsis thaliana (Mouse-ear cress) protein is Endo-1,4-beta-xylanase 1.